The chain runs to 200 residues: ATP-dependent Clp protease proteolytic subunit 1 (200 aa).

Serine 102 functions as the Nucleophile in the catalytic mechanism. Histidine 127 is a catalytic residue.

This sequence belongs to the peptidase S14 family. As to quaternary structure, fourteen ClpP subunits assemble into 2 heptameric rings which stack back to back to give a disk-like structure with a central cavity, resembling the structure of eukaryotic proteasomes.

It localises to the cytoplasm. It catalyses the reaction Hydrolysis of proteins to small peptides in the presence of ATP and magnesium. alpha-casein is the usual test substrate. In the absence of ATP, only oligopeptides shorter than five residues are hydrolyzed (such as succinyl-Leu-Tyr-|-NHMec, and Leu-Tyr-Leu-|-Tyr-Trp, in which cleavage of the -Tyr-|-Leu- and -Tyr-|-Trp bonds also occurs).. In terms of biological role, cleaves peptides in various proteins in a process that requires ATP hydrolysis. Has a chymotrypsin-like activity. Plays a major role in the degradation of misfolded proteins. This chain is ATP-dependent Clp protease proteolytic subunit 1, found in Bradyrhizobium diazoefficiens (strain JCM 10833 / BCRC 13528 / IAM 13628 / NBRC 14792 / USDA 110).